A 499-amino-acid chain; its full sequence is U4/U6 small nuclear ribonucleoprotein Prp31 (499 aa).

The tract at residues 1–37 is disordered; it reads MSLADELLADLEEAAEEEEGGSYGEEEEEPAIEDVQE. Over residues 7–37 the composition is skewed to acidic residues; that stretch reads LLADLEEAAEEEEGGSYGEEEEEPAIEDVQE. 2 coiled-coil regions span residues 85–120 and 181–215; these read EAAP…KYSK and EEEL…MSFI. Residues 215–333 form the Nop domain; the sequence is IAPNLSIIIG…IERKFDKWQE (119 aa). A disordered region spans residues 334–357; the sequence is PPPVKQVKPLPAPLDGQRKKRGGR. Residues 351–364 carry the Nuclear localization signal (NLS) motif; the sequence is RKKRGGRRYRKMKE. A phosphoserine mark is found at Ser379, Ser395, and Ser432. The residue at position 438 (Lys438) is an N6-acetyllysine. Position 439 is a phosphoserine (Ser439). Thr440 bears the Phosphothreonine mark. Ser450 carries the post-translational modification Phosphoserine. Phosphothreonine is present on Thr455. Residues Lys471 and Lys478 each participate in a glycyl lysine isopeptide (Lys-Gly) (interchain with G-Cter in SUMO2) cross-link.

This sequence belongs to the PRP31 family. In terms of assembly, identified in the spliceosome B complex. Component of the U4/U6-U5 tri-snRNP complex composed of the U4, U6 and U5 snRNAs and at least PRPF3, PRPF4, PRPF6, PRPF8, PRPF31, SNRNP200, TXNL4A, SNRNP40, DDX23, CD2BP2, PPIH, SNU13, EFTUD2, SART1 and USP39. Interacts with a complex formed by SNU13 and U4 snRNA, but not with SNU13 or U4 snRNA alone. The complex formed by SNU13 and PRPF31 also binds U4atac snRNA, a characteristic component of specific, less abundant spliceosomal complexes. Interacts with PRPF6/U5 snRNP-associated 102 kDa protein. Component of some MLL1/MLL complex, at least composed of the core components KMT2A/MLL1, ASH2L, HCFC1/HCF1, WDR5 and RBBP5, as well as the facultative components BACC1, CHD8, E2F6, HSP70, INO80C, KANSL1, LAS1L, MAX, MCRS1, MGA, KAT8/MOF, PELP1, PHF20, PRP31, RING2, RUVB1/TIP49A, RUVB2/TIP49B, SENP3, TAF1, TAF4, TAF6, TAF7, TAF9 and TEX10. Interacts (via its NLS) with CTNNBL1. Interacts with USH1G. In terms of processing, phosphorylated by PRP4K during spliceosome assembly. Ubiquitously expressed.

The protein resides in the nucleus. It localises to the nucleus speckle. Its subcellular location is the cajal body. Its function is as follows. Involved in pre-mRNA splicing as component of the spliceosome. Required for the assembly of the U4/U5/U6 tri-snRNP complex, one of the building blocks of the spliceosome. The protein is U4/U6 small nuclear ribonucleoprotein Prp31 of Homo sapiens (Human).